The sequence spans 397 residues: NADH-quinone oxidoreductase subunit D (397 aa).

This sequence belongs to the complex I 49 kDa subunit family. As to quaternary structure, NDH-1 is composed of 14 different subunits. Subunits NuoB, C, D, E, F, and G constitute the peripheral sector of the complex.

It localises to the cell inner membrane. The enzyme catalyses a quinone + NADH + 5 H(+)(in) = a quinol + NAD(+) + 4 H(+)(out). In terms of biological role, NDH-1 shuttles electrons from NADH, via FMN and iron-sulfur (Fe-S) centers, to quinones in the respiratory chain. The immediate electron acceptor for the enzyme in this species is believed to be ubiquinone. Couples the redox reaction to proton translocation (for every two electrons transferred, four hydrogen ions are translocated across the cytoplasmic membrane), and thus conserves the redox energy in a proton gradient. The sequence is that of NADH-quinone oxidoreductase subunit D from Magnetococcus marinus (strain ATCC BAA-1437 / JCM 17883 / MC-1).